The following is a 47-amino-acid chain: Large ribosomal subunit protein bL34 (47 aa).

The protein belongs to the bacterial ribosomal protein bL34 family.

The protein is Large ribosomal subunit protein bL34 of Mycobacterium sp. (strain JLS).